Consider the following 118-residue polypeptide: cAMP-responsive element-binding protein-like 2 (118 aa).

The tract at residues 1-25 (MDDSKVSGGKVKKPGKRGRKPAKID) is disordered. Residues 10–21 (KVKKPGKRGRKP) show a composition bias toward basic residues. Positions 23 to 86 (KIDLKAKLER…AAMDQGKIPS (64 aa)) constitute a bZIP domain. A basic motif region spans residues 29–60 (KLERSRQSARECRARKKLRYQYLEELVSSRER). Positions 62 to 69 (ICALREEL) are leucine-zipper.

It belongs to the bZIP family. ATF subfamily.

It localises to the nucleus. Functionally, probable regulator of creb1 transcriptional activity which is involved in adipose cells differentiation. May also play a regulatory role in the cell cycle. This is cAMP-responsive element-binding protein-like 2 (crebl2) from Xenopus tropicalis (Western clawed frog).